The following is a 774-amino-acid chain: MEGFLGFNHNHCFIVLFFVSLSLAQYEHWPYLPGYPEPPPQVYQPPRRPADVPKIQLRLAGQKRKHNEGRVEVFYNGEWGTVCDDDFSIHAAHVICRELGYVEAVSWLPSSKYGKGEGKIWMDNVHCNGKEATLAACTSNGWGVTDCKHTEDVGVVCSEKRIPGFKFDNSLLNQIENMNIQVEDIRIRPILATYRKRVPVTEGYVEVKDEGTWKQICDKHWTMKNSRVVCGMFGFPSERKYNTKVYKMFASRRKQHYWAYSMDCTGNEAHISSCKLGNHLNVDTEKNATCDNGMPAVASCVPGRAFAPSSHSGFRKAFRQEQPLVRLKGGANTGEGRVEVLKNGEWGTVCDDNWNLVSASVVCRELGFGSAKEAITGARLGQGMGPIHLNEIDCTGFEKSLTDCKFNMESQGCNHEEDAAVRCNVPAMGFQNQLRLVGGRNPYEGRVEVLAERNGTLRWGTVCSQGWSTVEAMVVCRQLGLGFASHAFQETWYWHGDVSADSVVMSGVKCSGTEMSLAHCRHDGADVSCPRGGGRFGAGVSCSETAPDLVLNAELVEQTAYLEDRPMFMLQCAQEENCLASSAVNTSVTSGYRRLLRFSSQIHNNGQSDFRPKNGRHAWVWHDCHRHYHSMEVFTHYDLLNLNGTKVAEGHKASFCLEDTECEADVQKQYECANFGEQGITVGCWDVYRHDIDCQWIDITDVPPGDYLFQVVINPNYEVAESDYSNNVMKCRSRYDGQRIWMYNSVHNGANQDGDTEERFSAYWKLGNSILFSR.

Residues 1–24 (MEGFLGFNHNHCFIVLFFVSLSLA) form the signal peptide. 4 SRCR domains span residues 57–158 (LRLA…VVCS), 187–301 (IRPI…ASCV), 325–424 (VRLK…VRCN), and 434–543 (LRLV…VSCS). 9 disulfides stabilise this stretch: C83-C147, C96-C157, C127-C137, C217-C290, C230-C300, C264-C274, C350-C413, C363-C423, and C394-C404. N287 carries N-linked (GlcNAc...) asparagine glycosylation. N454 carries an N-linked (GlcNAc...) asparagine glycan. Intrachain disulfides connect C463/C529, C476/C542, and C510/C520. A lysyl-oxidase like region spans residues 547-751 (PDLVLNAELV…MYNSVHNGAN (205 aa)). Residues D548 and L549 each contribute to the Ca(2+) site. 4 cysteine pairs are disulfide-bonded: C572–C624, C578–C694, C656–C672, and C662–C684. Residues H625, H627, and H629 each coordinate Cu cation. N643 carries N-linked (GlcNAc...) asparagine glycosylation. The lysine tyrosylquinone (Lys-Tyr) cross-link spans 652–688 (KASFCLEDTECEADVQKQYECANFGEQGITVGCWDVY). At Y688 the chain carries 2',4',5'-topaquinone. Residues E721, D723, N726, and N727 each coordinate Ca(2+).

It belongs to the lysyl oxidase family. Requires Cu cation as cofactor. Lysine tyrosylquinone residue is required as a cofactor. Post-translationally, the lysine tyrosylquinone cross-link (LTQ) is generated by condensation of the epsilon-amino group of a lysine with a topaquinone produced by oxidation of tyrosine.

It is found in the secreted. The protein localises to the extracellular space. The protein resides in the extracellular matrix. Its subcellular location is the basement membrane. It localises to the nucleus. It is found in the chromosome. The protein localises to the endoplasmic reticulum. It catalyses the reaction L-lysyl-[protein] + O2 + H2O = (S)-2-amino-6-oxohexanoyl-[protein] + H2O2 + NH4(+). Its function is as follows. Mediates the post-translational oxidative deamination of lysine residues on target proteins leading to the formation of deaminated lysine (allysine). Acts as a transcription corepressor and specifically mediates deamination of trimethylated 'Lys-4' of histone H3 (H3K4me3), a specific tag for epigenetic transcriptional activation. Shows no activity against histone H3 when it is trimethylated on 'Lys-9' (H3K9me3) or 'Lys-27' (H3K27me3) or when 'Lys-4' is monomethylated (H3K4me1) or dimethylated (H3K4me2). Also mediates deamination of methylated TAF10, a member of the transcription factor IID (TFIID) complex, which induces release of TAF10 from promoters, leading to inhibition of TFIID-dependent transcription. LOXL2-mediated deamination of TAF10 results in transcriptional repression of genes required for embryonic stem cell pluripotency including POU5F1/OCT4, NANOG, KLF4 and SOX2. Involved in epithelial to mesenchymal transition (EMT) via interaction with SNAI1 and participates in repression of E-cadherin CDH1, probably by mediating deamination of histone H3. During EMT, involved with SNAI1 in negatively regulating pericentromeric heterochromatin transcription. SNAI1 recruits LOXL2 to pericentromeric regions to oxidize histone H3 and repress transcription which leads to release of heterochromatin component CBX5/HP1A, enabling chromatin reorganization and acquisition of mesenchymal traits. Interacts with the endoplasmic reticulum protein HSPA5 which activates the IRE1-XBP1 pathway of the unfolded protein response, leading to expression of several transcription factors involved in EMT and subsequent EMT induction. When secreted into the extracellular matrix, promotes cross-linking of extracellular matrix proteins by mediating oxidative deamination of peptidyl lysine residues in precursors to fibrous collagen and elastin. Acts as a regulator of sprouting angiogenesis, probably via collagen IV scaffolding. Acts as a regulator of chondrocyte differentiation, probably by regulating expression of factors that control chondrocyte differentiation. This is Lysyl oxidase homolog 2 (LOXL2) from Gallus gallus (Chicken).